Consider the following 506-residue polypeptide: Spindle pole body protein CSA6 (506 aa).

4 disordered regions span residues 18 to 121 (SPIK…PNEN), 252 to 276 (EKHNNPQDSPPKVKIATPDPEVETQ), 329 to 429 (PSSP…YSIR), and 447 to 470 (KNDQKDTNSPEESNTDGKEEEEKV). A compositionally biased stretch (basic and acidic residues) spans 38 to 48 (IDLRDYMDRQK). A compositionally biased stretch (polar residues) spans 50 to 59 (SRNYSDSEYT). Basic and acidic residues predominate over residues 63–72 (IKREKPETKQ). A compositionally biased stretch (polar residues) spans 94-119 (PTKNYSQHVMQERSAPNSPQKKSLPN). 2 stretches are compositionally biased toward polar residues: residues 330-353 (SSPNHQTQPVFQSTPQSKVESVNL) and 361-389 (QPSHVSSNSQQNLSDKSRTSIPSRDNPSP). 2 stretches are compositionally biased toward basic and acidic residues: residues 412-422 (EWTREREERDG) and 461-470 (TDGKEEEEKV).

The protein resides in the cytoplasm. It localises to the cytoskeleton. Its subcellular location is the microtubule organizing center. It is found in the spindle pole body. In terms of biological role, plays a role in mitotic spindle pole body organization, possibly at the point of spindle pole body separation. Required for mitotic exit. The chain is Spindle pole body protein CSA6 from Candida tropicalis (strain ATCC MYA-3404 / T1) (Yeast).